The primary structure comprises 90 residues: Molybdopterin synthase sulfur carrier subunit (90 aa).

A 1-thioglycine; alternate modification is found at Gly-90. At Gly-90 the chain carries Glycyl adenylate; alternate.

It belongs to the MoaD family. MOCS2A subfamily. Heterotetramer; composed of 2 small (Mocs2A) and 2 large (Mocs2B) subunits. In terms of processing, C-terminal thiocarboxylation occurs in 2 steps, it is first acyl-adenylated (-COAMP) via the hesA/moeB/thiF part of MOCS3, then thiocarboxylated (-COSH) via the rhodanese domain of MOCS3.

It is found in the cytoplasm. The protein operates within cofactor biosynthesis; molybdopterin biosynthesis. In terms of biological role, acts as a sulfur carrier required for molybdopterin biosynthesis. Component of the molybdopterin synthase complex that catalyzes the conversion of precursor Z into molybdopterin by mediating the incorporation of 2 sulfur atoms into precursor Z to generate a dithiolene group. In the complex, serves as sulfur donor by being thiocarboxylated (-COSH) at its C-terminus by MOCS3. After interaction with Mocs2B, the sulfur is then transferred to precursor Z to form molybdopterin. The chain is Molybdopterin synthase sulfur carrier subunit from Drosophila simulans (Fruit fly).